The sequence spans 165 residues: Sec-independent protein translocase protein TatB (165 aa).

A helical membrane pass occupies residues 1–21 (MFDVSFTELIVIGVVALIVLG). Polar residues predominate over residues 67-84 (DSTAQDVNQSLRSATDSL). Positions 67–165 (DSTAQDVNQS…PKSPSTGNAT (99 aa)) are disordered. The segment covering 127–159 (KLPGTPATLPATAAAEPTPAAPAASQAEAPKSP) has biased composition (low complexity).

This sequence belongs to the TatB family. In terms of assembly, the Tat system comprises two distinct complexes: a TatABC complex, containing multiple copies of TatA, TatB and TatC subunits, and a separate TatA complex, containing only TatA subunits. Substrates initially bind to the TatABC complex, which probably triggers association of the separate TatA complex to form the active translocon.

It is found in the cell inner membrane. Functionally, part of the twin-arginine translocation (Tat) system that transports large folded proteins containing a characteristic twin-arginine motif in their signal peptide across membranes. Together with TatC, TatB is part of a receptor directly interacting with Tat signal peptides. TatB may form an oligomeric binding site that transiently accommodates folded Tat precursor proteins before their translocation. This chain is Sec-independent protein translocase protein TatB, found in Bordetella avium (strain 197N).